The sequence spans 246 residues: NAD-dependent protein deacylase (246 aa).

Residues 2–246 (PTAVSDAAAP…AGVCLPAMLA (245 aa)) enclose the Deacetylase sirtuin-type domain. Residue 29 to 49 (GAGVSAESGVPTFRDALTGLW) participates in NAD(+) binding. Residues Tyr74 and Arg77 each coordinate substrate. 107 to 110 (QNVD) contacts NAD(+). His125 acts as the Proton acceptor in catalysis. Positions 137, 140, 153, and 156 each coordinate Zn(2+). NAD(+)-binding positions include 193-195 (GTS), 219-221 (NPE), and Ala237.

The protein belongs to the sirtuin family. Class III subfamily. Zn(2+) serves as cofactor.

It localises to the cytoplasm. The enzyme catalyses N(6)-acetyl-L-lysyl-[protein] + NAD(+) + H2O = 2''-O-acetyl-ADP-D-ribose + nicotinamide + L-lysyl-[protein]. The catalysed reaction is N(6)-succinyl-L-lysyl-[protein] + NAD(+) + H2O = 2''-O-succinyl-ADP-D-ribose + nicotinamide + L-lysyl-[protein]. Its function is as follows. NAD-dependent lysine deacetylase and desuccinylase that specifically removes acetyl and succinyl groups on target proteins. Modulates the activities of several proteins which are inactive in their acylated form. The sequence is that of NAD-dependent protein deacylase from Ralstonia nicotianae (strain ATCC BAA-1114 / GMI1000) (Ralstonia solanacearum).